The primary structure comprises 510 residues: Laccase (510 aa).

Plastocyanin-like domains lie at 45 to 79 (PTKLWTYNGSLPGPTIKANRNEKVKVKWMNKLPLK), 99 to 174 (KTVV…LISD), 242 to 317 (YLEV…IVLK), and 372 to 506 (LTLT…MRPM). Histidine 103, histidine 105, histidine 151, and histidine 153 together coordinate Cu cation. Histidine 419, histidine 422, histidine 424, histidine 491, cysteine 492, histidine 493, histidine 497, and methionine 502 together coordinate Cu cation.

It belongs to the multicopper oxidase family. Requires Cu(2+) as cofactor.

The enzyme catalyses 4 hydroquinone + O2 = 4 benzosemiquinone + 2 H2O. Resistant to alkali and organic solvents such as methanol, ethanol and acetone. Resistant to EDTA, which might be explained by the spatial protection of copper ions in the active sites. Inhibited by DMSO. Strongly inhibited by Fe(2+) and DTT. Multicopper oxidase that catalyzes the oxidation of a variety of substrates, including phenolic and non-phenolic compounds. Substrates include 2,6-dimethoxyphenol (2,6-DMP) and the non-phenolic compound 2,2'-azino-bis(3-ethylbenzothiazoline-6-sulfonic acid) (ABTS). Cannot use guaiacol and catechol. This is Laccase from Bacillus stratosphericus.